An 83-amino-acid polypeptide reads, in one-letter code: Sulfur carrier protein TusA (83 aa).

Cys19 acts as the Cysteine persulfide intermediate in catalysis.

Belongs to the sulfur carrier protein TusA family.

It is found in the cytoplasm. Its function is as follows. Sulfur carrier protein which probably makes part of a sulfur-relay system. This chain is Sulfur carrier protein TusA, found in Vibrio atlanticus (strain LGP32) (Vibrio splendidus (strain Mel32)).